The chain runs to 1715 residues: Ubiquitin carboxyl-terminal hydrolase 32 (1715 aa).

EF-hand domains are found at residues 161–196 (IPKN…ACRG) and 197–232 (PGVE…LLLV). Ca(2+) contacts are provided by Asp-174, Asn-176, Asp-178, His-180, Glu-185, Asp-210, Asp-212, Asp-214, and Glu-221. One can recognise a DUSP domain in the interval 314 to 492 (QCKHMENDIV…DNLPLPRQVI (179 aa)). Residues 393–429 (QHDSYSLGSGTGSASGSGSASSGISAGRHCGPVRPGP) are disordered. Residues 408 to 419 (GSGSASSGISAG) show a composition bias toward low complexity. The region spanning 677–1675 (TGLHNLGNTC…AAYLLFYERK (999 aa)) is the USP domain. Cys-686 functions as the Nucleophile in the catalytic mechanism. 2 stretches are compositionally biased toward polar residues: residues 1103–1126 (TESN…SSLT) and 1150–1164 (YRTS…STGH). Disordered regions lie at residues 1103–1213 (TESN…PHKA) and 1536–1569 (DEID…GNIL). Over residues 1171-1180 (DVDEQAEEGN) the composition is skewed to acidic residues. Residues 1188 to 1209 (DQITTSQPETSSGVYSRRSSQP) are compositionally biased toward polar residues. Over residues 1540 to 1549 (APSKEVKEEL) the composition is skewed to basic and acidic residues. Polar residues predominate over residues 1550–1559 (PNQTGSTKAT). Residue His-1633 is the Proton acceptor of the active site.

It belongs to the peptidase C19 family. USP20/USP33 subfamily.

The enzyme catalyses Thiol-dependent hydrolysis of ester, thioester, amide, peptide and isopeptide bonds formed by the C-terminal Gly of ubiquitin (a 76-residue protein attached to proteins as an intracellular targeting signal).. Functionally, deubiquitinating enzyme that acts as an inhibitor of mitophagy probably by counteracting the action of park. Possibly functions by hydrolyzing ubiquitin attached by park on target proteins, thereby reducing park's ability to drive mitophagy. The polypeptide is Ubiquitin carboxyl-terminal hydrolase 32 (Drosophila melanogaster (Fruit fly)).